The primary structure comprises 88 residues: Mitochondrial import inner membrane translocase subunit Tim10 (88 aa).

Residues 25–49 (CSAKCISKYNEGDLNVGESVCAERC) carry the Twin CX3C motif motif. Cystine bridges form between cysteine 25-cysteine 49 and cysteine 29-cysteine 45. A disordered region spans residues 63 to 88 (KMSGTQPGQEVPQEAPAAAPEKKGWF). Low complexity predominate over residues 68–81 (QPGQEVPQEAPAAA).

Belongs to the small Tim family. In terms of assembly, heterohexamer; composed of 3 copies of timm9 and 3 copies of timm10, named soluble 70 kDa complex. Associates directly with the TIM22 complex, whose core is composed of timm22. Interacts with the transmembrane regions of multi-pass transmembrane proteins in transit.

It localises to the mitochondrion inner membrane. In terms of biological role, component of the TIM22 complex, a complex that mediates the import and insertion of multi-pass transmembrane proteins into the mitochondrial inner membrane. The TIM22 complex forms a twin-pore translocase that uses the membrane potential as external driving force. This chain is Mitochondrial import inner membrane translocase subunit Tim10 (timm10), found in Dictyostelium discoideum (Social amoeba).